A 363-amino-acid chain; its full sequence is MSLKHFIQDALSNWMKQKGPESDIVLSSRIRLARNFENIKFPARYTNEEASSIIQQFEDHFSGKELPDIGQFHLIRMSEAQPLEKRVLMEKHLISPNLTESPFGGCLLSENEEVSIMLNEEDHIRIQCLFPGFQLLNAIKAANQVDDWIEEKVDYAFGEKRGYLTSCPTNVGTGLRASVMMHLPGLVLTRQMNRIIPAINQLGLVVRGIYGEGSEALGNIFQISNQITLGKSEQDIVDDLNSVAAQLIEQERSAREALYQTSKIELEDRVFRSYGVLSNCRMIESKETAKCLSDVRLGIDLGIIKGLSSNILNELMILTQPGFLQQYSGGALRPNERDARRAALIRERLHLEMSANRQEDDSI.

Residues 24–254 enclose the Phosphagen kinase C-terminal domain; the sequence is IVLSSRIRLA…AQLIEQERSA (231 aa). ATP contacts are provided by residues 27 to 31, histidine 92, arginine 125, 176 to 180, and 207 to 212; these read SSRIR, RASVM, and RGIYGE. An RDXXRA motif of the pArg binding pocket involved in allosteric regulation motif is present at residues 337-342; the sequence is RDARRA.

It belongs to the ATP:guanido phosphotransferase family.

The enzyme catalyses L-arginyl-[protein] + ATP = N(omega)-phospho-L-arginyl-[protein] + ADP + H(+). Appears to be allosterically activated by the binding of pArg-containing polypeptides to the pArg-binding pocket localized in the C-terminal domain of McsB. In terms of biological role, catalyzes the specific phosphorylation of arginine residues in a large number of proteins. Is part of the bacterial stress response system. Protein arginine phosphorylation has a physiologically important role and is involved in the regulation of many critical cellular processes, such as protein homeostasis, motility, competence, and stringent and stress responses, by regulating gene expression and protein activity. This Bacillus velezensis (strain DSM 23117 / BGSC 10A6 / LMG 26770 / FZB42) (Bacillus amyloliquefaciens subsp. plantarum) protein is Protein-arginine kinase.